A 333-amino-acid chain; its full sequence is B3 domain-containing transcription factor NGA4 (333 aa).

Residues 36–145 (FDKVLTPSDV…KIMFIDWRPR (110 aa)) constitute a DNA-binding region (TF-B3). A disordered region spans residues 268–333 (VEESSSSGDT…YKRKGKSLEL (66 aa)). Basic and acidic residues predominate over residues 323-333 (EYKRKGKSLEL).

The protein localises to the nucleus. Functionally, regulates lateral organ growth. Functionally redundant with NGA1, NGA2 and NGA3. This chain is B3 domain-containing transcription factor NGA4 (NGA4), found in Arabidopsis thaliana (Mouse-ear cress).